A 281-amino-acid polypeptide reads, in one-letter code: Ribosomal RNA small subunit methyltransferase A (281 aa).

S-adenosyl-L-methionine is bound by residues Asn-35, Leu-37, Gly-62, Glu-83, Asp-107, and Asn-125.

Belongs to the class I-like SAM-binding methyltransferase superfamily. rRNA adenine N(6)-methyltransferase family. RsmA subfamily.

Its subcellular location is the cytoplasm. It catalyses the reaction adenosine(1518)/adenosine(1519) in 16S rRNA + 4 S-adenosyl-L-methionine = N(6)-dimethyladenosine(1518)/N(6)-dimethyladenosine(1519) in 16S rRNA + 4 S-adenosyl-L-homocysteine + 4 H(+). In terms of biological role, specifically dimethylates two adjacent adenosines (A1518 and A1519) in the loop of a conserved hairpin near the 3'-end of 16S rRNA in the 30S particle. May play a critical role in biogenesis of 30S subunits. The polypeptide is Ribosomal RNA small subunit methyltransferase A (Deinococcus geothermalis (strain DSM 11300 / CIP 105573 / AG-3a)).